Consider the following 796-residue polypeptide: Nuclear GTPase SLIP-GC (796 aa).

A compositionally biased stretch (basic and acidic residues) spans methionine 1–glutamate 22. The interval methionine 1 to arginine 35 is disordered. Glycine 107 to serine 114 contributes to the GTP binding site. 2 coiled-coil regions span residues serine 158–aspartate 185 and lysine 745–lysine 775.

As to expression, expressed in germinal center B-cell and in lymphomas derived from germinal center B-cell.

It is found in the nucleus speckle. In terms of biological role, nuclear GTPase found in germinal center B-cells, where it may inhibit function of the activation-induced cytidine deaminase AICDA. Reduces somatic hypermutation in B-cells which may enhance genome stability. The polypeptide is Nuclear GTPase SLIP-GC (NUGGC) (Homo sapiens (Human)).